A 61-amino-acid chain; its full sequence is Large ribosomal subunit protein eL37 (61 aa).

Residues Cys19, Cys22, Cys34, and Cys37 each contribute to the Zn(2+) site. The C4-type zinc-finger motif lies at 19–37 (CRRCGRNAYNVSKHYCAAC).

The protein belongs to the eukaryotic ribosomal protein eL37 family. Zn(2+) is required as a cofactor.

In terms of biological role, binds to the 23S rRNA. The protein is Large ribosomal subunit protein eL37 of Saccharolobus islandicus (strain L.S.2.15 / Lassen #1) (Sulfolobus islandicus).